The chain runs to 434 residues: Eukaryotic translation initiation factor 3 subunit E (434 aa).

The 174-residue stretch at 219 to 392 folds into the PCI domain; that stretch reads FFNHPKGRDL…GHVVMGTQPL (174 aa).

Belongs to the eIF-3 subunit E family. As to quaternary structure, component of the eukaryotic translation initiation factor 3 (eIF-3) complex. The eIF-3 complex interacts with pix. Interacts with mxt.

It is found in the cytoplasm. Its function is as follows. Component of the eukaryotic translation initiation factor 3 (eIF-3) complex, which is involved in protein synthesis of a specialized repertoire of mRNAs and, together with other initiation factors, stimulates binding of mRNA and methionyl-tRNAi to the 40S ribosome. The eIF-3 complex specifically targets and initiates translation of a subset of mRNAs involved in cell proliferation. This chain is Eukaryotic translation initiation factor 3 subunit E (eIF3-S6), found in Drosophila ananassae (Fruit fly).